The chain runs to 209 residues: V-type ATP synthase subunit D 2 (209 aa).

This sequence belongs to the V-ATPase D subunit family.

Its function is as follows. Produces ATP from ADP in the presence of a proton gradient across the membrane. This chain is V-type ATP synthase subunit D 2 (atpD2), found in Treponema pallidum (strain Nichols).